Consider the following 490-residue polypeptide: Cytochrome P450 71B29 (490 aa).

Residues 1-21 form a helical membrane-spanning segment; the sequence is MAIILCFLILLPLILIFLKKL. Residue cysteine 440 coordinates heme.

Belongs to the cytochrome P450 family. It depends on heme as a cofactor.

The protein resides in the membrane. This is Cytochrome P450 71B29 (CYP71B29) from Arabidopsis thaliana (Mouse-ear cress).